Here is a 506-residue protein sequence, read N- to C-terminus: ATP synthase subunit alpha (506 aa).

Residue 172 to 179 (GDRKTGKT) participates in ATP binding.

This sequence belongs to the ATPase alpha/beta chains family. As to quaternary structure, F-type ATPases have 2 components, CF(1) - the catalytic core - and CF(0) - the membrane proton channel. CF(1) has five subunits: alpha(3), beta(3), gamma(1), delta(1), epsilon(1). CF(0) has three main subunits: a(1), b(2) and c(9-12). The alpha and beta chains form an alternating ring which encloses part of the gamma chain. CF(1) is attached to CF(0) by a central stalk formed by the gamma and epsilon chains, while a peripheral stalk is formed by the delta and b chains.

The protein resides in the cell membrane. It carries out the reaction ATP + H2O + 4 H(+)(in) = ADP + phosphate + 5 H(+)(out). Functionally, produces ATP from ADP in the presence of a proton gradient across the membrane. The alpha chain is a regulatory subunit. This chain is ATP synthase subunit alpha, found in Lactobacillus gasseri (strain ATCC 33323 / DSM 20243 / BCRC 14619 / CIP 102991 / JCM 1131 / KCTC 3163 / NCIMB 11718 / NCTC 13722 / AM63).